A 691-amino-acid chain; its full sequence is Elongation factor G (691 aa).

Residues glutamate 8 to valine 282 enclose the tr-type G domain. Residues alanine 17–threonine 24, aspartate 81–histidine 85, and asparagine 135–aspartate 138 each bind GTP.

Belongs to the TRAFAC class translation factor GTPase superfamily. Classic translation factor GTPase family. EF-G/EF-2 subfamily.

The protein localises to the cytoplasm. In terms of biological role, catalyzes the GTP-dependent ribosomal translocation step during translation elongation. During this step, the ribosome changes from the pre-translocational (PRE) to the post-translocational (POST) state as the newly formed A-site-bound peptidyl-tRNA and P-site-bound deacylated tRNA move to the P and E sites, respectively. Catalyzes the coordinated movement of the two tRNA molecules, the mRNA and conformational changes in the ribosome. This Prochlorococcus marinus (strain AS9601) protein is Elongation factor G.